A 376-amino-acid chain; its full sequence is T-box transcription factor 18 (376 aa).

Low complexity predominate over residues 38 to 63 (STSRPSSSSPPSLPAVSSELLSSSFP). Positions 38–76 (STSRPSSSSPPSLPAVSSELLSSSFPTNAPESSSRDLAP) are disordered. The T-box DNA-binding region spans 171-364 (LANQEQWAKF…GNKYCRTDRK (194 aa)).

The protein localises to the nucleus. Functionally, transcriptional regulator involved in developmental processes. Directly binds to the promoter region of the sex-determining factor xol-1 to activate its transcription. Its activation of xol-1 transcription controls sex determination and X chromosome dosage compensation to promote male development. Has a role in the fox-1-sex-1-mediated determination of sexual fate. This chain is T-box transcription factor 18, found in Caenorhabditis elegans.